The sequence spans 300 residues: Ribosomal protein bS6--L-glutamate ligase (300 aa).

The 184-residue stretch at 104-287 (LQLLARQGID…IAGRMIQWIE (184 aa)) folds into the ATP-grasp domain. Residues lysine 141, 178 to 179 (EY), aspartate 187, and 211 to 213 (RSN) each bind ATP. Residues aspartate 248, glutamate 260, and asparagine 262 each contribute to the Mg(2+) site. Positions 248, 260, and 262 each coordinate Mn(2+).

It belongs to the RimK family. Requires Mg(2+) as cofactor. The cofactor is Mn(2+).

Functionally, an L-glutamate ligase that catalyzes the ATP-dependent post-translational addition of glutamate residues to the C-terminus of ribosomal protein bS6 (RpsF). Is also able to catalyze the synthesis of poly-alpha-glutamate in vitro, via ATP hydrolysis from unprotected glutamate as substrate. The number of glutamate residues added to either RpsF or to poly-alpha-glutamate changes with pH. The sequence is that of Ribosomal protein bS6--L-glutamate ligase from Salmonella agona (strain SL483).